A 142-amino-acid chain; its full sequence is Large ribosomal subunit protein uL13 (142 aa).

This sequence belongs to the universal ribosomal protein uL13 family. In terms of assembly, part of the 50S ribosomal subunit.

This protein is one of the early assembly proteins of the 50S ribosomal subunit, although it is not seen to bind rRNA by itself. It is important during the early stages of 50S assembly. This Shewanella baltica (strain OS223) protein is Large ribosomal subunit protein uL13.